A 788-amino-acid chain; its full sequence is Phenylalanine--tRNA ligase beta subunit (788 aa).

The tRNA-binding domain occupies 39–147; that stretch reads FNVSGEIITA…DPVELGVNVV (109 aa). The 74-residue stretch at 399–472 folds into the B5 domain; that stretch reads IEPKKVMLRK…RIYGYEKVES (74 aa). 4 residues coordinate Mg(2+): aspartate 450, aspartate 456, glutamate 459, and glutamate 460. In terms of domain architecture, FDX-ACB spans 694–787; it reads PRFPAVRRDI…AEREFGIRRR (94 aa).

This sequence belongs to the phenylalanyl-tRNA synthetase beta subunit family. Type 1 subfamily. As to quaternary structure, tetramer of two alpha and two beta subunits. Mg(2+) is required as a cofactor.

It localises to the cytoplasm. The catalysed reaction is tRNA(Phe) + L-phenylalanine + ATP = L-phenylalanyl-tRNA(Phe) + AMP + diphosphate + H(+). This is Phenylalanine--tRNA ligase beta subunit (pheT) from Thermotoga maritima (strain ATCC 43589 / DSM 3109 / JCM 10099 / NBRC 100826 / MSB8).